The chain runs to 471 residues: 3-isopropylmalate dehydratase large subunit (471 aa).

[4Fe-4S] cluster is bound by residues Cys347, Cys407, and Cys410.

Belongs to the aconitase/IPM isomerase family. LeuC type 1 subfamily. As to quaternary structure, heterodimer of LeuC and LeuD. It depends on [4Fe-4S] cluster as a cofactor.

The catalysed reaction is (2R,3S)-3-isopropylmalate = (2S)-2-isopropylmalate. The protein operates within amino-acid biosynthesis; L-leucine biosynthesis; L-leucine from 3-methyl-2-oxobutanoate: step 2/4. Catalyzes the isomerization between 2-isopropylmalate and 3-isopropylmalate, via the formation of 2-isopropylmaleate. This is 3-isopropylmalate dehydratase large subunit from Acaryochloris marina (strain MBIC 11017).